Here is a 101-residue protein sequence, read N- to C-terminus: Interleukin-8 (101 aa).

Residues 1–22 (MPSQLRVAVLAAFLLSAVLCEG) form the signal peptide. Disulfide bonds link Cys34-Cys61 and Cys36-Cys77.

It belongs to the intercrine alpha (chemokine CxC) family. As to quaternary structure, homodimer. Interacts with TNFAIP6 (via Link domain); this interaction interferes with chemokine binding to glycosaminoglycans.

Its subcellular location is the secreted. Its function is as follows. Chemotactic factor that mediates inflammatory response by attracting neutrophils, basophils, and T-cells to clear pathogens and protect the host from infection. Also plays an important role in neutrophil activation. Released in response to an inflammatory stimulus, exerts its effect by binding to the G-protein-coupled receptors CXCR1 and CXCR2, primarily found in neutrophils, monocytes and endothelial cells. G-protein heterotrimer (alpha, beta, gamma subunits) constitutively binds to CXCR1/CXCR2 receptor and activation by IL8 leads to beta and gamma subunits release from Galpha (GNAI2 in neutrophils) and activation of several downstream signaling pathways including PI3K and MAPK pathways. This Cavia porcellus (Guinea pig) protein is Interleukin-8 (CXCL8).